Consider the following 112-residue polypeptide: Divalent-cation tolerance protein CutA (112 aa).

Positions 16, 83, and 84 each coordinate Cu cation.

It belongs to the CutA family. In terms of assembly, homotrimer. It depends on Cu cation as a cofactor.

The protein localises to the cytoplasm. In terms of biological role, involved in resistance toward heavy metals. In Escherichia coli O81 (strain ED1a), this protein is Divalent-cation tolerance protein CutA.